The following is a 505-amino-acid chain: Probable amino-acid permease PB1C11.02 (505 aa).

11 helical membrane-spanning segments follow: residues 25 to 45 (MLAF…SSLA), 50 to 70 (ASLL…MLAL), 149 to 169 (IITP…PVGG), 175 to 195 (YWLS…GILC), 221 to 241 (IIGV…TESI), 266 to 286 (VLLL…YNTP), 305 to 325 (FGVP…ALSA), 357 to 377 (GIPW…LMSS), 383 to 403 (WGFL…FIAV), 425 to 445 (NWTY…FLFL), and 456 to 476 (LSLF…YLIW).

This sequence belongs to the amino acid-polyamine-organocation (APC) superfamily.

It is found in the membrane. The sequence is that of Probable amino-acid permease PB1C11.02 from Schizosaccharomyces pombe (strain 972 / ATCC 24843) (Fission yeast).